The chain runs to 156 residues: Small ribosomal subunit protein uS7 (156 aa).

Belongs to the universal ribosomal protein uS7 family. Part of the 30S ribosomal subunit. Contacts proteins S9 and S11.

In terms of biological role, one of the primary rRNA binding proteins, it binds directly to 16S rRNA where it nucleates assembly of the head domain of the 30S subunit. Is located at the subunit interface close to the decoding center, probably blocks exit of the E-site tRNA. The sequence is that of Small ribosomal subunit protein uS7 from Leifsonia xyli subsp. xyli (strain CTCB07).